Reading from the N-terminus, the 130-residue chain is Small ribosomal subunit protein uS11 (130 aa).

The protein belongs to the universal ribosomal protein uS11 family. In terms of assembly, part of the 30S ribosomal subunit. Interacts with proteins S7 and S18. Binds to IF-3.

In terms of biological role, located on the platform of the 30S subunit, it bridges several disparate RNA helices of the 16S rRNA. Forms part of the Shine-Dalgarno cleft in the 70S ribosome. The sequence is that of Small ribosomal subunit protein uS11 from Synechococcus sp. (strain WH7803).